The following is a 468-amino-acid chain: GDNF family receptor alpha-1 (468 aa).

A signal peptide spans M1–G24. 3 consecutive repeat copies span residues D25 to N113, K150 to R238, and E239 to I342. A disulfide bond links C36 and C42. N-linked (GlcNAc...) asparagine glycosylation occurs at N59. Disulfide bonds link C154-C214, C161-C167, C178-C192, C187-C233, C216-C221, C243-C313, C250-C256, C267-C285, C277-C337, and C315-C325. Residues N347 and N406 are each glycosylated (N-linked (GlcNAc...) asparagine). The GPI-anchor amidated serine moiety is linked to residue S430. Residues H431–S468 constitute a propeptide, removed in mature form.

It belongs to the GDNFR family. In terms of assembly, interacts with GDNF ligand and RET: forms a 2:2:2 ternary complex composed of GDNF ligand, GFRA1 and RET receptor. Interacts with SORL1, either alone or in complex with GDNF. Interaction between SORL1 and GFRA1 leads to GFRA1 internalization, but not degradation. In terms of tissue distribution, expressed in liver, brain, kidney and cochlea.

Its subcellular location is the cell membrane. The protein localises to the golgi apparatus. The protein resides in the trans-Golgi network. It localises to the endosome. It is found in the multivesicular body. Functionally, coreceptor for GDNF, a neurotrophic factor that enhances survival and morphological differentiation of dopaminergic neurons and increases their high-affinity dopamine uptake. GDNF-binding leads to autophosphorylation and activation of the RET receptor. In Rattus norvegicus (Rat), this protein is GDNF family receptor alpha-1 (Gfra1).